The primary structure comprises 451 residues: UDP-N-acetylmuramoylalanine--D-glutamate ligase (451 aa).

118–124 (GTKGKST) lines the ATP pocket.

This sequence belongs to the MurCDEF family.

Its subcellular location is the cytoplasm. It catalyses the reaction UDP-N-acetyl-alpha-D-muramoyl-L-alanine + D-glutamate + ATP = UDP-N-acetyl-alpha-D-muramoyl-L-alanyl-D-glutamate + ADP + phosphate + H(+). It functions in the pathway cell wall biogenesis; peptidoglycan biosynthesis. Cell wall formation. Catalyzes the addition of glutamate to the nucleotide precursor UDP-N-acetylmuramoyl-L-alanine (UMA). The polypeptide is UDP-N-acetylmuramoylalanine--D-glutamate ligase (Borreliella burgdorferi (strain ZS7) (Borrelia burgdorferi)).